We begin with the raw amino-acid sequence, 732 residues long: Coagulation factor XIII A chain (732 aa).

The tract at residues 1 to 26 (MSDTPASTFGGRRAVPPNNSNAAEVD) is disordered. S2 carries the post-translational modification N-acetylserine. Residues 2–38 (SDTPASTFGGRRAVPPNNSNAAEVDLPTEELQGLVPR) constitute a propeptide, activation peptide. Active-site residues include C315, H374, and D397. 4 residues coordinate Ca(2+): N437, D439, E486, and E491. N614 is a glycosylation site (N-linked (GlcNAc...) asparagine).

Belongs to the transglutaminase superfamily. Transglutaminase family. Tetramer of two A chains (F13A1) and two B (F13B) chains. Requires Ca(2+) as cofactor. Post-translationally, the activation peptide is released by thrombin.

The protein localises to the cytoplasm. Its subcellular location is the secreted. It carries out the reaction L-glutaminyl-[protein] + L-lysyl-[protein] = [protein]-L-lysyl-N(6)-5-L-glutamyl-[protein] + NH4(+). Factor XIII is activated by thrombin and calcium ion to a transglutaminase that catalyzes the formation of gamma-glutamyl-epsilon-lysine cross-links between fibrin chains, thus stabilizing the fibrin clot. Also cross-link alpha-2-plasmin inhibitor, or fibronectin, to the alpha chains of fibrin. This is Coagulation factor XIII A chain (F13a1) from Mus musculus (Mouse).